The chain runs to 354 residues: Bifunctional transcriptional activator/DNA repair enzyme Ada (354 aa).

Positions 1–171 (MKKATCLTDD…SSSYYRKADE (171 aa)) are methylphosphotriester-DNA--protein-cysteine methyltransferase. T34 lines the DNA pocket. Residue C38 is the Nucleophile; methyl group acceptor from methylphosphotriester of the active site. 2 residues coordinate Zn(2+): C38 and C42. Positions 43, 45, and 67 each coordinate DNA. Positions 69 and 72 each coordinate Zn(2+). The region spanning 85 to 183 (DKITHACRLL…GMTAKQFRHG (99 aa)) is the HTH araC/xylS-type domain. Positions 102-121 (LEALADQVAMSPFHLHRLFK) form a DNA-binding region, H-T-H motif. The tract at residues 181 to 354 (RHGGENLAVR…LRREAENEER (174 aa)) is methylated-DNA--protein-cysteine methyltransferase. C321 acts as the Nucleophile; methyl group acceptor from either O6-methylguanine or O4-methylthymine in catalysis.

This sequence in the C-terminal section; belongs to the MGMT family. The cofactor is Zn(2+).

The catalysed reaction is (2'-deoxyribonucleoside 5'-methylphosphotriester)-DNA + L-cysteinyl-[protein] = 2'-deoxyribonucleotide-DNA + S-methyl-L-cysteinyl-[protein] + H(+). It carries out the reaction a 6-O-methyl-2'-deoxyguanosine in DNA + L-cysteinyl-[protein] = S-methyl-L-cysteinyl-[protein] + a 2'-deoxyguanosine in DNA. It catalyses the reaction a 4-O-methyl-thymidine in DNA + L-cysteinyl-[protein] = a thymidine in DNA + S-methyl-L-cysteinyl-[protein]. Its function is as follows. Involved in the adaptive response to alkylation damage in DNA caused by alkylating agents. Repairs O6-methylguanine (O6-MeG) and O4-methylthymine (O4-MeT) in DNA. Repairs the methylated nucleobase in DNA by stoichiometrically transferring the methyl group to a cysteine residue in the enzyme (Cys-321). Also specifically repairs the Sp diastereomer of DNA methylphosphotriester lesions by the same mechanism, although the methyl transfer occurs onto a different cysteine residue (Cys-38). Cannot demethylate the other diastereomer, Rp-methylphosphotriester. This is a suicide reaction: the enzyme is irreversibly inactivated. In terms of biological role, the methylation of Ada by methylphosphotriesters in DNA leads to its activation as a transcriptional regulator that activates the transcription of its own gene, ada, and other alkylation resistance genes, alkA, alkB and aidB. This chain is Bifunctional transcriptional activator/DNA repair enzyme Ada (ada), found in Escherichia coli (strain K12).